A 61-amino-acid polypeptide reads, in one-letter code: Chromatin protein Cren7 (61 aa).

This sequence belongs to the Cren7 family. Monomer. Methylated at multiple sites, to varying extents.

It is found in the chromosome. The protein resides in the cytoplasm. Functionally, a chromatin protein, binds double-stranded DNA without sequence specificity. Constrains negative DNA supercoils. The protein is Chromatin protein Cren7 of Caldivirga maquilingensis (strain ATCC 700844 / DSM 13496 / JCM 10307 / IC-167).